A 248-amino-acid polypeptide reads, in one-letter code: Mannose-binding protein C (248 aa).

A signal peptide spans 1–20 (MSLIPSLSLLLMSMVAASYS). The Collagen-like domain maps to 42–99 (GINGFPGKDGRDGTKGEKGEPGQGLRGLQGPPGKLGPPGNPGPSGSPGPKGQKGDPGK). Residues 43–107 (INGFPGKDGR…GKSPDCDSSL (65 aa)) form a disordered region. 4-hydroxyproline is present on Pro47. Residues 49–61 (KDGRDGTKGEKGE) are compositionally biased toward basic and acidic residues. 4 positions are modified to 4-hydroxyproline: Pro73, Pro79, Pro82, and Pro88. Residues 75-87 (KLGPPGNPGPSGS) show a composition bias toward pro residues. A compositionally biased stretch (basic and acidic residues) spans 93–102 (QKGDPGKSPD). Residues 112-130 (RKALQTEMARIKKWLTFSL) are a coiled coil. Residues 134–245 (VGNKFFLTNG…CSSSHLAVCE (112 aa)) form the C-type lectin domain. 2 disulfides stabilise this stretch: Cys155-Cys244 and Cys222-Cys236.

Oligomeric complex of 3 or more homotrimers. Interacts with MASP1 and MASP2. Interacts with MEP1A and MEP1B and may inhibit their catalytic activity. In terms of processing, hydroxylation on proline residues within the sequence motif, GXPG, is most likely to be 4-hydroxy as this fits the requirement for 4-hydroxylation in vertebrates.

Its subcellular location is the secreted. Functionally, calcium-dependent lectin involved in innate immune defense. Binds mannose, fucose and N-acetylglucosamine on different microorganisms and activates the lectin complement pathway. Binds to late apoptotic cells, as well as to apoptotic blebs and to necrotic cells, but not to early apoptotic cells, facilitating their uptake by macrophages. In Hylobates lar (Lar gibbon), this protein is Mannose-binding protein C (MBL2).